Consider the following 293-residue polypeptide: Biphenyl-2,3-diol 1,2-dioxygenase (293 aa).

VOC domains follow at residues 5–119 and 143–265; these read RLGY…IYYG and GIGH…FGWG. 3 residues coordinate Fe cation: H146, H210, and E261.

Belongs to the extradiol ring-cleavage dioxygenase family. In terms of assembly, homooctamer. Fe(2+) is required as a cofactor.

The enzyme catalyses biphenyl-2,3-diol + O2 = 2-hydroxy-6-oxo-6-phenylhexa-2,4-dienoate + H(+). It participates in xenobiotic degradation; biphenyl degradation; 2-hydroxy-2,4-pentadienoate and benzoate from biphenyl: step 3/4. This chain is Biphenyl-2,3-diol 1,2-dioxygenase (bphC), found in Pseudomonas sp. (strain KKS102).